Consider the following 98-residue polypeptide: NADH-ubiquinone oxidoreductase chain 4L (98 aa).

3 helical membrane passes run 2–22 (PPIF…TLIF), 29–49 (SLLC…LIIL), and 61–81 (ILLL…LVMV).

It belongs to the complex I subunit 4L family. Core subunit of respiratory chain NADH dehydrogenase (Complex I) which is composed of 45 different subunits.

The protein localises to the mitochondrion inner membrane. It catalyses the reaction a ubiquinone + NADH + 5 H(+)(in) = a ubiquinol + NAD(+) + 4 H(+)(out). Core subunit of the mitochondrial membrane respiratory chain NADH dehydrogenase (Complex I) which catalyzes electron transfer from NADH through the respiratory chain, using ubiquinone as an electron acceptor. Part of the enzyme membrane arm which is embedded in the lipid bilayer and involved in proton translocation. The chain is NADH-ubiquinone oxidoreductase chain 4L (MT-ND4L) from Avahi unicolor (Sambirano woolly lemur).